The sequence spans 529 residues: Peptide chain release factor 3 (529 aa).

Residues 11-280 (AKRRTFAIIS…GLVEWAPAPM (270 aa)) form the tr-type G domain. GTP-binding positions include 20–27 (SHPDAGKT), 88–92 (DTPGH), and 142–145 (NKLD).

This sequence belongs to the TRAFAC class translation factor GTPase superfamily. Classic translation factor GTPase family. PrfC subfamily.

The protein resides in the cytoplasm. In terms of biological role, increases the formation of ribosomal termination complexes and stimulates activities of RF-1 and RF-2. It binds guanine nucleotides and has strong preference for UGA stop codons. It may interact directly with the ribosome. The stimulation of RF-1 and RF-2 is significantly reduced by GTP and GDP, but not by GMP. In Shigella flexneri, this protein is Peptide chain release factor 3.